The sequence spans 292 residues: Probable 2-(5''-triphosphoribosyl)-3'-dephosphocoenzyme-A synthase (292 aa).

It belongs to the CitG/MdcB family.

It catalyses the reaction 3'-dephospho-CoA + ATP = 2'-(5''-triphospho-alpha-D-ribosyl)-3'-dephospho-CoA + adenine. The sequence is that of Probable 2-(5''-triphosphoribosyl)-3'-dephosphocoenzyme-A synthase from Shigella flexneri.